We begin with the raw amino-acid sequence, 406 residues long: MKAVVFIIDGLGDRPNKQGNTPLKEAHTPTMDKMAKEGICGIMNAVDIGVGPGSDTAHLALLGYNPYTTYTGRGPFEACGVGIDVKAGDIAFRCNFATVDDNLTIIDRRAGRIKNTEELEKAIDGLKVDGVEVIFKQSGGYRAALVLRGPNLSDKITEGDPHKEGVPIPEVKPLDNSEDAKRTATILNKVIKIAHDKLNSHPVNEERRKNGELPANAILPRGVGMVPNIQPFNEKNDIKGACIAGTGLIKGIAKMVQLDYIDVEGATGTPTTNLKNKADALLNAIKTYDFVLINVKGADEASHDGNYELKKEFIEKIDKMLKYILENIDKNEVYITLTGDHSTPIEKKDHSADPIPIVIWGKSVRVDAVETFDEFSTYKGGLCWIKGENIVPILLDLTGKAHKYGA.

A compositionally biased stretch (basic and acidic residues) spans 156-165 (ITEGDPHKEG). Residues 156–177 (ITEGDPHKEGVPIPEVKPLDNS) form a disordered region.

The protein belongs to the BPG-independent phosphoglycerate mutase family. A-PGAM subfamily.

The catalysed reaction is (2R)-2-phosphoglycerate = (2R)-3-phosphoglycerate. The protein operates within carbohydrate degradation; glycolysis; pyruvate from D-glyceraldehyde 3-phosphate: step 3/5. Functionally, catalyzes the interconversion of 2-phosphoglycerate and 3-phosphoglycerate. In Methanococcus aeolicus (strain ATCC BAA-1280 / DSM 17508 / OCM 812 / Nankai-3), this protein is 2,3-bisphosphoglycerate-independent phosphoglycerate mutase.